Reading from the N-terminus, the 492-residue chain is Probable glycine dehydrogenase (decarboxylating) subunit 2 (492 aa).

Residue Lys274 is modified to N6-(pyridoxal phosphate)lysine.

This sequence belongs to the GcvP family. C-terminal subunit subfamily. As to quaternary structure, the glycine cleavage system is composed of four proteins: P, T, L and H. In this organism, the P 'protein' is a heterodimer of two subunits. Pyridoxal 5'-phosphate serves as cofactor.

The catalysed reaction is N(6)-[(R)-lipoyl]-L-lysyl-[glycine-cleavage complex H protein] + glycine + H(+) = N(6)-[(R)-S(8)-aminomethyldihydrolipoyl]-L-lysyl-[glycine-cleavage complex H protein] + CO2. Functionally, the glycine cleavage system catalyzes the degradation of glycine. The P protein binds the alpha-amino group of glycine through its pyridoxal phosphate cofactor; CO(2) is released and the remaining methylamine moiety is then transferred to the lipoamide cofactor of the H protein. The protein is Probable glycine dehydrogenase (decarboxylating) subunit 2 of Exiguobacterium sibiricum (strain DSM 17290 / CCUG 55495 / CIP 109462 / JCM 13490 / 255-15).